A 342-amino-acid polypeptide reads, in one-letter code: Inositol-tetrakisphosphate 1-kinase 1 (342 aa).

Residues Lys28 and Lys70 each coordinate 1D-myo-inositol 6-phosphate. Arg105 and Lys155 together coordinate ATP. Positions 116–332 (DHAADQDSTF…HKDGVGNQQE (217 aa)) constitute an ATP-grasp domain. 1D-myo-inositol 6-phosphate-binding residues include Gly161 and His166. Positions 166, 187, and 190 each coordinate ATP. Residues Lys198 and Tyr200 each coordinate 1D-myo-inositol 6-phosphate. Ser213 contacts ATP. A catalytic specificity elements (CSE) region spans residues 219 to 247 (PEDDASAQGSVSFSQVSNLPTERTAEEYY). Asn280 provides a ligand contact to 1D-myo-inositol 6-phosphate. Mg(2+) is bound at residue Asp282. ATP is bound by residues Ile296, Asp297, and Asn299. The Mg(2+) site is built by Asp297 and Asn299. Residues Asn299, Gly303, and Lys306 each contribute to the 1D-myo-inositol 6-phosphate site.

This sequence belongs to the ITPK1 family. As to quaternary structure, monomer. Mg(2+) serves as cofactor. Expressed in the embryo of 15 day after pollination. Expressed in kernels at earlier stages but at very low levels. Expression in the embryo peaks at 15 days after pollination and then declines. No expression is detected from endosperm and vegetative tissues.

It carries out the reaction 1D-myo-inositol 3,4,5,6-tetrakisphosphate + ATP = 1D-myo-inositol 1,3,4,5,6-pentakisphosphate + ADP + H(+). The enzyme catalyses 1D-myo-inositol 1,3,4-trisphosphate + ATP = 1D-myo-inositol 1,3,4,5-tetrakisphosphate + ADP + H(+). The catalysed reaction is 1D-myo-inositol 1,3,4-trisphosphate + ATP = 1D-myo-inositol 1,3,4,6-tetrakisphosphate + ADP + H(+). It catalyses the reaction 1D-myo-inositol 1,2,3,4,5-pentakisphosphate + ATP = 3-diphospho-1D-myo-inositol 1,2,4,5-tetrakisphosphate + ADP. It carries out the reaction 1D-myo-inositol hexakisphosphate + ATP = 5-diphospho-1D-myo-inositol 1,2,3,4,6-pentakisphosphate + ADP. Kinase that can phosphorylate various inositol polyphosphate such as Ins(3,4,5,6)P4 or Ins(1,3,4)P3 and participates in phytic acid biosynthesis in developing seeds. Phosphorylates Ins(3,4,5,6)P4 at position 1 to form Ins(1,3,4,5,6)P5. This reaction is thought to have regulatory importance, since Ins(3,4,5,6)P4 is an inhibitor of plasma membrane Ca(2+)-activated Cl(-) channels, while Ins(1,3,4,5,6)P5 is not. Also phosphorylates Ins(1,3,4)P3 on O-5 and O-6 to form Ins(1,3,4,6)P4, an essential molecule in the hexakisphosphate (InsP6) pathway. Also able to phosphorylate Ins(3,5,6)P3 but not Ins(1,4,5)P3, Ins(2,4,5)P3, Ins(1,3,4,6)P4 nor Ins(1,3,5,6)P4. Has higher specific activity on Ins(3,4,5,6)P4 than Ins(1,3,4)P3 and Ins(3,5,6)P3. Can also could use Ins(1,2,5,6)P4 as a substrate. Able to add a beta-phosphate to the 3 positions of Ins(1,2,3,4,5)P5 and to add beta-phosphate to InsP6 to yield 5-InsP7, thus exhibiting InsP6 kinase activity. Also has Ins(1,3,4,5,6)P5 phosphatase activity. The polypeptide is Inositol-tetrakisphosphate 1-kinase 1 (Zea mays (Maize)).